Here is a 381-residue protein sequence, read N- to C-terminus: MESIGIVAPQTMHFAEPLRLQSGSVIGNYQLVVETYGELNAARSNAVLVCHALNASHHVAGVYADDPRSTGWWDNMVGPGKPLDTNRFFVIGVNNLGSCFGSTGPMSIDPSSGKPYGARFPVVTVEDWVHAQARVADAFGIERFAAVMGGSLGGMQALAWSLMYPERVAHCIDIASTPKLSAQNIAFNEVARSAILSDPDFHGGDYYAHGVKPKRGLRVARMIGHITYLSDDDMAEKFGRALRRADGALDAYNFSFDVEFEVESYLRYQGDKFADYFDANTYLLITRALDYFDPAKAFDGNLTAALAHTQAKYLIASFSTDWRFAPARSREIVKALLDNKRTVSYAEIDAPHGHDAFLLDDARYHNLLRAYYERIANEVGA.

Positions 45–360 (NAVLVCHALN…PHGHDAFLLD (316 aa)) constitute an AB hydrolase-1 domain. Ser151 serves as the catalytic Nucleophile. Arg221 serves as a coordination point for substrate. Residues Asp321 and His354 contribute to the active site. Position 355 (Asp355) interacts with substrate.

It belongs to the AB hydrolase superfamily. MetX family. Homodimer.

It localises to the cytoplasm. The enzyme catalyses L-homoserine + succinyl-CoA = O-succinyl-L-homoserine + CoA. It functions in the pathway amino-acid biosynthesis; L-methionine biosynthesis via de novo pathway; O-succinyl-L-homoserine from L-homoserine: step 1/1. Transfers a succinyl group from succinyl-CoA to L-homoserine, forming succinyl-L-homoserine. In Burkholderia ambifaria (strain ATCC BAA-244 / DSM 16087 / CCUG 44356 / LMG 19182 / AMMD) (Burkholderia cepacia (strain AMMD)), this protein is Homoserine O-succinyltransferase.